A 52-amino-acid polypeptide reads, in one-letter code: Gastrin/cholecystokinin-like peptide (52 aa).

Belongs to the gastrin/cholecystokinin family.

The protein localises to the secreted. In terms of biological role, may control digestion processes. The polypeptide is Gastrin/cholecystokinin-like peptide (Trachemys scripta (Red-eared slider turtle)).